The following is a 270-amino-acid chain: 1-deoxy-11-beta-hydroxypentalenate dehydrogenase (270 aa).

12–36 (GAASGIGFALSARLAQAGARVVMTD) is a binding site for NAD(+). Substrate is bound at residue Ser-144. The active-site Proton acceptor is Tyr-157. An NAD(+)-binding site is contributed by Lys-161.

It belongs to the short-chain dehydrogenases/reductases (SDR) family.

It catalyses the reaction 1-deoxy-11beta-hydroxypentalenate + NAD(+) = 1-deoxy-11-oxopentalenate + NADH + H(+). Its pathway is antibiotic biosynthesis; neopentalenolactone biosynthesis. Catalyzes the oxidation of 1-deoxy-11-beta-hydroxypentalenic acid to 1-deoxy-11-oxopentalenic acid in the biosynthesis of neopentalenolactone antibiotic. The polypeptide is 1-deoxy-11-beta-hydroxypentalenate dehydrogenase (ptlF) (Streptomyces avermitilis (strain ATCC 31267 / DSM 46492 / JCM 5070 / NBRC 14893 / NCIMB 12804 / NRRL 8165 / MA-4680)).